The primary structure comprises 34 residues: Photosystem II reaction center protein M (34 aa).

Residues 5-25 (ILAFIATALFILVPTAFLLII) traverse the membrane as a helical segment.

This sequence belongs to the PsbM family. In terms of assembly, PSII is composed of 1 copy each of membrane proteins PsbA, PsbB, PsbC, PsbD, PsbE, PsbF, PsbH, PsbI, PsbJ, PsbK, PsbL, PsbM, PsbT, PsbX, PsbY, PsbZ, Psb30/Ycf12, at least 3 peripheral proteins of the oxygen-evolving complex and a large number of cofactors. It forms dimeric complexes.

The protein localises to the plastid. Its subcellular location is the chloroplast thylakoid membrane. Functionally, one of the components of the core complex of photosystem II (PSII). PSII is a light-driven water:plastoquinone oxidoreductase that uses light energy to abstract electrons from H(2)O, generating O(2) and a proton gradient subsequently used for ATP formation. It consists of a core antenna complex that captures photons, and an electron transfer chain that converts photonic excitation into a charge separation. This subunit is found at the monomer-monomer interface. In Calycanthus floridus var. glaucus (Eastern sweetshrub), this protein is Photosystem II reaction center protein M.